A 294-amino-acid chain; its full sequence is NAD kinase (294 aa).

The active-site Proton acceptor is Asp-74. NAD(+)-binding positions include 74–75, 148–149, His-159, Arg-176, Asp-178, 189–194, and Gln-249; these read DG, NE, and TAYSLS.

It belongs to the NAD kinase family. Requires a divalent metal cation as cofactor.

It is found in the cytoplasm. The catalysed reaction is NAD(+) + ATP = ADP + NADP(+) + H(+). In terms of biological role, involved in the regulation of the intracellular balance of NAD and NADP, and is a key enzyme in the biosynthesis of NADP. Catalyzes specifically the phosphorylation on 2'-hydroxyl of the adenosine moiety of NAD to yield NADP. This chain is NAD kinase, found in Vibrio vulnificus (strain CMCP6).